We begin with the raw amino-acid sequence, 528 residues long: MAASDQHRSRRHDESSSRPNKKKKVSRNPETNLLFNLNSCSKSKDLSAALALYDAAITSSEVRLSQQHFQTLLYLCSASITDISLQYLAIDRGFEIFDRMVSSGISPNEASVTSVARLAAAKGNGDYAFKVVKEFVSVGGVSIPRLRTYAPALLCFCEKLEAEKGYEVEEHMEAAGIALEEAEISALLKVSAATGRENKVYRYLHKLREYVGCVSEETLKIIEEWFCGEKAGEVGDNGIGSDVGMLREAVLNNGGGWHGHGWVGEGKWTVKKGNVSSTGRCLSCSEQLACVDTNEVETQKFVDSLVALAMDRKTKMNSCETNVVFSEFQDWLEKHGDYEAIVDGANIGLYQQNFVDGSFSLSQLESVMKELYRESGNNKWPLILLHKRRVKTLLENPTHRNLVEEWISNGVLYATPPGSNDDWYWLYAAAKLKCLLVTNDEMRDHIFELLGSTFFQKWKERHQVRYTFVKGNLKLEMPSPFSVVIQESEKGSWHFPVSCENNEESSRTWMCISRQSILDSPKSNGKIP.

The span at 1–16 shows a compositional bias: basic and acidic residues; it reads MAASDQHRSRRHDESS. A disordered region spans residues 1–28; it reads MAASDQHRSRRHDESSSRPNKKKKVSRN. 4 PPR repeats span residues 29 to 64, 72 to 107, 108 to 142, and 145 to 179; these read PETN…EVRL, LLYL…GISP, NEAS…GGVS, and RLRT…GIAL. The PRORP domain maps to 275 to 511; it reads VSSTGRCLSC…NEESSRTWMC (237 aa). Positions 281 and 284 each coordinate Zn(2+). The Mg(2+) site is built by Asp-343, Asp-421, Asp-422, and Asp-440. Positions 494 and 511 each coordinate Zn(2+).

Belongs to the PPR family. P subfamily. As to quaternary structure, monomer; forms dimers in crystallo but monomers in solution. Requires Mg(2+) as cofactor.

It localises to the nucleus. It catalyses the reaction Endonucleolytic cleavage of RNA, removing 5'-extranucleotides from tRNA precursor.. Functionally, endonuclease RNase P responsible for the 5' maturation of tRNA precursors. Preferentially binds precursor tRNAs containing short 5' leaders and 3' trailers. Also involved in the maturation of mRNA and small nucleolar RNA (snoRNA). In Arabidopsis thaliana (Mouse-ear cress), this protein is Proteinaceous RNase P 2 (PRORP2).